Consider the following 159-residue polypeptide: Phosphopantetheine adenylyltransferase (159 aa).

Ser-8 is a substrate binding site. ATP contacts are provided by residues 8–9 (SF) and His-16. Positions 40, 73, and 87 each coordinate substrate. ATP contacts are provided by residues 88–90 (GLR), Glu-98, and 122–128 (YGYVSST).

This sequence belongs to the bacterial CoaD family. In terms of assembly, homohexamer. It depends on Mg(2+) as a cofactor.

The protein resides in the cytoplasm. The catalysed reaction is (R)-4'-phosphopantetheine + ATP + H(+) = 3'-dephospho-CoA + diphosphate. The protein operates within cofactor biosynthesis; coenzyme A biosynthesis; CoA from (R)-pantothenate: step 4/5. In terms of biological role, reversibly transfers an adenylyl group from ATP to 4'-phosphopantetheine, yielding dephospho-CoA (dPCoA) and pyrophosphate. The polypeptide is Phosphopantetheine adenylyltransferase (Corynebacterium efficiens (strain DSM 44549 / YS-314 / AJ 12310 / JCM 11189 / NBRC 100395)).